Consider the following 294-residue polypeptide: Cytidine deaminase (294 aa).

2 consecutive CMP/dCMP-type deaminase domains span residues 48-168 and 186-294; these read DEDA…FGPK and VSGD…VLLG. 89 to 91 is a binding site for substrate; the sequence is NME. His-102 provides a ligand contact to Zn(2+). Glu-104 acts as the Proton donor in catalysis. Residues Cys-129 and Cys-132 each contribute to the Zn(2+) site.

It belongs to the cytidine and deoxycytidylate deaminase family. Homodimer. The cofactor is Zn(2+).

It catalyses the reaction cytidine + H2O + H(+) = uridine + NH4(+). The catalysed reaction is 2'-deoxycytidine + H2O + H(+) = 2'-deoxyuridine + NH4(+). Its function is as follows. This enzyme scavenges exogenous and endogenous cytidine and 2'-deoxycytidine for UMP synthesis. This Klebsiella pneumoniae (strain 342) protein is Cytidine deaminase.